A 110-amino-acid polypeptide reads, in one-letter code: U1-lycotoxin-Ls1mm (110 aa).

Residues 1 to 20 (MKFVLLFGVLLVTLFSYSSA) form the signal peptide. Residues 21–44 (EMLDDFDQADEDELLSLIEKEEAR) constitute a propeptide that is removed on maturation. 4 cysteine pairs are disulfide-bonded: C47–C62, C54–C71, C61–C89, and C73–C87.

The protein belongs to the neurotoxin 19 (CSTX) family. 03 subfamily. As to expression, expressed by the venom gland.

It is found in the secreted. The sequence is that of U1-lycotoxin-Ls1mm from Lycosa singoriensis (Wolf spider).